A 190-amino-acid polypeptide reads, in one-letter code: RNA pyrophosphohydrolase (190 aa).

In terms of domain architecture, Nudix hydrolase spans G6–C149. Positions G38 to G59 match the Nudix box motif.

It belongs to the Nudix hydrolase family. RppH subfamily. It depends on a divalent metal cation as a cofactor.

Its function is as follows. Accelerates the degradation of transcripts by removing pyrophosphate from the 5'-end of triphosphorylated RNA, leading to a more labile monophosphorylated state that can stimulate subsequent ribonuclease cleavage. The protein is RNA pyrophosphohydrolase of Xylella fastidiosa (strain Temecula1 / ATCC 700964).